We begin with the raw amino-acid sequence, 282 residues long: D-alanine aminotransferase (282 aa).

Residue Tyr-32 coordinates substrate. Position 51 (Arg-51) interacts with pyridoxal 5'-phosphate. Substrate contacts are provided by Arg-99 and His-101. The Proton acceptor role is filled by Lys-146. Position 146 is an N6-(pyridoxal phosphate)lysine (Lys-146). Glu-178 is a binding site for pyridoxal 5'-phosphate.

Belongs to the class-IV pyridoxal-phosphate-dependent aminotransferase family. In terms of assembly, homodimer. Pyridoxal 5'-phosphate serves as cofactor.

The enzyme catalyses D-alanine + 2-oxoglutarate = D-glutamate + pyruvate. Functionally, acts on the D-isomers of alanine, leucine, aspartate, glutamate, aminobutyrate, norvaline and asparagine. The enzyme transfers an amino group from a substrate D-amino acid to the pyridoxal phosphate cofactor to form pyridoxamine and an alpha-keto acid in the first half-reaction. The second half-reaction is the reverse of the first, transferring the amino group from the pyridoxamine to a second alpha-keto acid to form the product D-amino acid via a ping-pong mechanism. This is an important process in the formation of D-alanine and D-glutamate, which are essential bacterial cell wall components. The chain is D-alanine aminotransferase (dat) from Staphylococcus epidermidis (strain ATCC 35984 / DSM 28319 / BCRC 17069 / CCUG 31568 / BM 3577 / RP62A).